Consider the following 352-residue polypeptide: UDP-N-acetylglucosamine--N-acetylmuramyl-(pentapeptide) pyrophosphoryl-undecaprenol N-acetylglucosamine transferase 3 (352 aa).

UDP-N-acetyl-alpha-D-glucosamine is bound by residues 11-13, Arg-164, Ser-194, and Gln-289; that span reads SAG.

The protein belongs to the glycosyltransferase 28 family. MurG subfamily.

Its subcellular location is the cell membrane. The enzyme catalyses di-trans,octa-cis-undecaprenyl diphospho-N-acetyl-alpha-D-muramoyl-L-alanyl-D-glutamyl-meso-2,6-diaminopimeloyl-D-alanyl-D-alanine + UDP-N-acetyl-alpha-D-glucosamine = di-trans,octa-cis-undecaprenyl diphospho-[N-acetyl-alpha-D-glucosaminyl-(1-&gt;4)]-N-acetyl-alpha-D-muramoyl-L-alanyl-D-glutamyl-meso-2,6-diaminopimeloyl-D-alanyl-D-alanine + UDP + H(+). It participates in cell wall biogenesis; peptidoglycan biosynthesis. Its function is as follows. Cell wall formation. Catalyzes the transfer of a GlcNAc subunit on undecaprenyl-pyrophosphoryl-MurNAc-pentapeptide (lipid intermediate I) to form undecaprenyl-pyrophosphoryl-MurNAc-(pentapeptide)GlcNAc (lipid intermediate II). This is UDP-N-acetylglucosamine--N-acetylmuramyl-(pentapeptide) pyrophosphoryl-undecaprenol N-acetylglucosamine transferase 3 from Bacillus thuringiensis (strain Al Hakam).